Here is a 714-residue protein sequence, read N- to C-terminus: MLFTLSILSTLLFSTSISAIEITQNRVDHGTITTSIGDITIDSGAYWSIIDNSISTFIGNLDIKSNAGLYISSTISNLPLLVLLNSGSASITNDGIVSLDARTSTQGSSQFNLVGGSFENNGEFYLAASGAIPMTMGLTGKSWNNNGLIVAYQNERSSGSVKFGVIGQTITNKGQICLTNQVYQQTSKIDGSGCVTAKKNASIYISNVLDPQSVSTEQNYFLADDKSSIITQAVGFNTQVINVFGFGNGNKIGLTLPLKSGNGGQAYSYDSDSGVLSLSSGLFGQKFNIGPGYDSKLFSIVTDNSEGIPSVNNGAVSYSGPVPSQKSLPSACNVECKPVPNAPDDGSSSSSSVVSSTTSTASTDSASLSSTSGEESSASTTTTESSETSNTSSNASETNGSSTESETTGSATTSEASETINSSESSETSGASETSQSTGTSESSETESSVTESSETDSITATTSDTTSSGNDNSSVTSSSDASTDSITSETASSSSTPLSGDSSQVSSLTTGTSPDTIASFQTDSTSFGFGSGSPSSGAVQSSGVTNSTPNTGDVNTQSNTANIATSDNTATSTASNDTGVNTATATTTGTGTGPDNNNNNNNNNNNNNNNNNNNNNNNNNNTNNSGVSAADSKASGDISTVTASSTTLISVASVSSTYPIANESSSPSSSSSSSSSSSGTPGEVIPNANGSSKLSIGMTFMISGFATMFALFM.

Residues 1-19 (MLFTLSILSTLLFSTSISA) form the signal peptide. The N-linked (GlcNAc...) asparagine glycan is linked to Asn-200. Residues 320-330 (GPVPSQKSLPS) are compositionally biased toward polar residues. 2 disordered regions span residues 320–633 (GPVP…AADS) and 660–692 (PIAN…ANGS). Residues 346–504 (GSSSSSSVVS…SSTPLSGDSS (159 aa)) are compositionally biased toward low complexity. Asn-390, Asn-394, Asn-399, Asn-421, and Asn-473 each carry an N-linked (GlcNAc...) asparagine glycan. Polar residues predominate over residues 505 to 519 (QVSSLTTGTSPDTIA). Low complexity predominate over residues 520 to 544 (SFQTDSTSFGFGSGSPSSGAVQSSG). Positions 545–558 (VTNSTPNTGDVNTQ) are enriched in polar residues. 2 stretches are compositionally biased toward low complexity: residues 559–590 (SNTA…TTTG) and 597–625 (NNNN…NTNN). N-linked (GlcNAc...) asparagine glycans are attached at residues Asn-577, Asn-621, Asn-624, and Asn-663. Residues 665 to 679 (SSSPSSSSSSSSSSS) are compositionally biased toward low complexity. N-linked (GlcNAc...) asparagine glycosylation occurs at Asn-690. Asn-690 carries the GPI-anchor amidated asparagine lipid modification. A propeptide spans 691–714 (GSSKLSIGMTFMISGFATMFALFM) (removed in mature form).

This sequence belongs to the HYR1/IFF family. The GPI-anchor is attached to the protein in the endoplasmic reticulum and serves to target the protein to the cell surface. There, the glucosamine-inositol phospholipid moiety is cleaved off and the GPI-modified mannoprotein is covalently attached via its lipidless GPI glycan remnant to the 1,6-beta-glucan of the outer cell wall layer.

It is found in the secreted. The protein resides in the cell wall. It localises to the membrane. In terms of biological role, GPI-anchored cell wall protein involved in cell wall organization, hyphal growth, as well as in host-fungal interaction and virulence. The polypeptide is Cell wall protein IFF7 (IFF8) (Candida albicans (strain SC5314 / ATCC MYA-2876) (Yeast)).